A 189-amino-acid chain; its full sequence is MNEEIMTQLRSHREVMEAVERELTPRIAAFAGMLVAALKGGKKLLVMGNGGSAADAQHFAAEIVGRFKMERRGLPAVALTTDTSILTAIGNDYGFDAVFRRQVEALADEGDVVVGLSTSGSSRNVYDALALANDRGCITVGLLGRDGGTLKDIVDLDVTVPSGDTPRIQEGHITIIHIVCDLVEKGLFK.

Residues Leu-34–Lys-189 form the SIS domain. Asn-49–Gly-51 is a binding site for substrate. 2 residues coordinate Zn(2+): His-58 and Glu-62. Residues Glu-62, Asn-91–Asp-92, Ser-117–Ser-119, Ser-122, and Gln-169 each bind substrate. Positions 169 and 177 each coordinate Zn(2+).

Belongs to the SIS family. GmhA subfamily. As to quaternary structure, homotetramer. Requires Zn(2+) as cofactor.

It localises to the cytoplasm. It carries out the reaction 2 D-sedoheptulose 7-phosphate = D-glycero-alpha-D-manno-heptose 7-phosphate + D-glycero-beta-D-manno-heptose 7-phosphate. The protein operates within carbohydrate biosynthesis; D-glycero-D-manno-heptose 7-phosphate biosynthesis; D-glycero-alpha-D-manno-heptose 7-phosphate and D-glycero-beta-D-manno-heptose 7-phosphate from sedoheptulose 7-phosphate: step 1/1. Catalyzes the isomerization of sedoheptulose 7-phosphate in D-glycero-D-manno-heptose 7-phosphate. This chain is Phosphoheptose isomerase, found in Geobacter metallireducens (strain ATCC 53774 / DSM 7210 / GS-15).